The following is a 932-amino-acid chain: Protocadherin gamma-A2 (932 aa).

Residues 1–28 form the signal peptide; the sequence is MAALQKLPHCRKLVLLCFLLATLWEARA. 6 consecutive Cadherin domains span residues 29-133, 134-242, 243-347, 348-452, 453-562, and 570-682; these read GQIR…APRF, GVEE…APVF, TQPE…APEF, YMTS…APAF, SRTS…APEI, and DGST…EPSA. The Extracellular segment spans residues 29 to 692; that stretch reads GQIRYSVREE…IPNDSDLTLY (664 aa). 2 N-linked (GlcNAc...) asparagine glycosylation sites follow: Asn419 and Asn545. N-linked (GlcNAc...) asparagine glycosylation is present at Asn685. The helical transmembrane segment at 693–713 threads the bilayer; sequence LVVAVAAVSCVFLAFVIVLLA. The Cytoplasmic portion of the chain corresponds to 714–932; that stretch reads HRLRRWHKSR…KKKSGKKEKK (219 aa). Disordered regions lie at residues 798–841 and 902–932; these read LEEE…WPNN and ATLTNAAGKRDGKAPAGGNGNKKKSGKKEKK. Residues 806-841 are compositionally biased toward polar residues; sequence FSQQAPPNTDWRFSQAQRPGTSGSQNGDDTGTWPNN. Over residues 922–932 the composition is skewed to basic residues; it reads NKKKSGKKEKK.

It is found in the cell membrane. Functionally, potential calcium-dependent cell-adhesion protein. May be involved in the establishment and maintenance of specific neuronal connections in the brain. This chain is Protocadherin gamma-A2 (PCDHGA2), found in Homo sapiens (Human).